A 249-amino-acid chain; its full sequence is Triosephosphate isomerase (249 aa).

9 to 11 (NWK) provides a ligand contact to substrate. His-94 functions as the Electrophile in the catalytic mechanism. Residue Glu-166 is the Proton acceptor of the active site. Substrate contacts are provided by residues Gly-172, Ser-211, and 232–233 (GG).

It belongs to the triosephosphate isomerase family. Homodimer.

The protein resides in the cytoplasm. The catalysed reaction is D-glyceraldehyde 3-phosphate = dihydroxyacetone phosphate. The protein operates within carbohydrate biosynthesis; gluconeogenesis. It participates in carbohydrate degradation; glycolysis; D-glyceraldehyde 3-phosphate from glycerone phosphate: step 1/1. In terms of biological role, involved in the gluconeogenesis. Catalyzes stereospecifically the conversion of dihydroxyacetone phosphate (DHAP) to D-glyceraldehyde-3-phosphate (G3P). This Chromohalobacter salexigens (strain ATCC BAA-138 / DSM 3043 / CIP 106854 / NCIMB 13768 / 1H11) protein is Triosephosphate isomerase.